The sequence spans 772 residues: NAD(P)H-quinone oxidoreductase subunit 5, chloroplastic (772 aa).

Transmembrane regions (helical) follow at residues 8–28 (IWIV…GLFF), 39–59 (ICAI…FSIF), 87–107 (FLID…GILV), 120–140 (GYVR…GLVL), 147–167 (IYIF…FWFS), 185–205 (GDFG…SFDI), 219–239 (NGVN…GPAA), 258–278 (TPIS…FFVA), 291–311 (MNII…IALA), 395–415 (GTTF…ACFW), 425–445 (WIAS…TGFY), 574–594 (LFSL…GVPF), 631–651 (IPSV…YGPV), 710–730 (WIID…GEGM), and 738–758 (IPSY…ILII).

The protein belongs to the complex I subunit 5 family. In terms of assembly, NDH is composed of at least 16 different subunits, 5 of which are encoded in the nucleus.

It is found in the plastid. The protein localises to the chloroplast thylakoid membrane. It carries out the reaction a plastoquinone + NADH + (n+1) H(+)(in) = a plastoquinol + NAD(+) + n H(+)(out). It catalyses the reaction a plastoquinone + NADPH + (n+1) H(+)(in) = a plastoquinol + NADP(+) + n H(+)(out). Functionally, NDH shuttles electrons from NAD(P)H:plastoquinone, via FMN and iron-sulfur (Fe-S) centers, to quinones in the photosynthetic chain and possibly in a chloroplast respiratory chain. The immediate electron acceptor for the enzyme in this species is believed to be plastoquinone. Couples the redox reaction to proton translocation, and thus conserves the redox energy in a proton gradient. This chain is NAD(P)H-quinone oxidoreductase subunit 5, chloroplastic (ndhF), found in Angiopteris evecta (Mule's foot fern).